A 178-amino-acid chain; its full sequence is Photosystem I assembly protein Ycf4 (178 aa).

A run of 2 helical transmembrane segments spans residues 19–39 and 61–81; these read FLVA…SLSS and LVMG…WYVI.

It belongs to the Ycf4 family.

Its subcellular location is the cellular thylakoid membrane. Seems to be required for the assembly of the photosystem I complex. The chain is Photosystem I assembly protein Ycf4 from Synechococcus sp. (strain CC9902).